A 131-amino-acid polypeptide reads, in one-letter code: UPF0102 protein YraN (131 aa).

Positions 1–19 (MATVPTRSGSPRQLTTKQT) are enriched in polar residues. The disordered stretch occupies residues 1-20 (MATVPTRSGSPRQLTTKQTG).

Belongs to the UPF0102 family.

This is UPF0102 protein YraN from Escherichia coli (strain 55989 / EAEC).